The chain runs to 64 residues: Prokaryotic ubiquitin-like protein Pup (64 aa).

Residues 1–37 are disordered; the sequence is MAQEQTKRGGGGGDDEDVTGTTAAGQERREKLAQDTD. The ARC ATPase binding stretch occupies residues 21–58; the sequence is TTAAGQERREKLAQDTDDLLDEIDDVLEENAEDFVRAY. A coiled-coil region spans residues 25-52; sequence GQERREKLAQDTDDLLDEIDDVLEENAE. At Gln64 the chain carries Deamidated glutamine. Gln64 participates in a covalent cross-link: Isoglutamyl lysine isopeptide (Gln-Lys) (interchain with K-? in acceptor proteins).

It belongs to the prokaryotic ubiquitin-like protein family. Strongly interacts with the proteasome-associated ATPase ARC through a hydrophobic interface; the interacting region of Pup lies in its C-terminal half. There is one Pup binding site per ARC hexamer ring. Is modified by deamidation of its C-terminal glutamine to glutamate by the deamidase Dop, a prerequisite to the subsequent pupylation process.

It functions in the pathway protein degradation; proteasomal Pup-dependent pathway. Functionally, protein modifier that is covalently attached to lysine residues of substrate proteins, thereby targeting them for proteasomal degradation. The tagging system is termed pupylation. The protein is Prokaryotic ubiquitin-like protein Pup of Mycobacterium marinum (strain ATCC BAA-535 / M).